The primary structure comprises 486 residues: Ribulose bisphosphate carboxylase large chain (486 aa).

2 residues coordinate substrate: Asn-126 and Thr-176. Lys-178 functions as the Proton acceptor in the catalytic mechanism. Lys-180 contacts substrate. Mg(2+) is bound by residues Lys-204, Asp-206, and Glu-207. Position 204 is an N6-carboxylysine (Lys-204). The active-site Proton acceptor is the His-296. The substrate site is built by Arg-297, His-329, and Ser-381.

The protein belongs to the RuBisCO large chain family. Type I subfamily. As to quaternary structure, heterohexadecamer of 8 large chains and 8 small chains. Mg(2+) is required as a cofactor.

It catalyses the reaction 2 (2R)-3-phosphoglycerate + 2 H(+) = D-ribulose 1,5-bisphosphate + CO2 + H2O. It carries out the reaction D-ribulose 1,5-bisphosphate + O2 = 2-phosphoglycolate + (2R)-3-phosphoglycerate + 2 H(+). Its function is as follows. RuBisCO catalyzes two reactions: the carboxylation of D-ribulose 1,5-bisphosphate, the primary event in carbon dioxide fixation, as well as the oxidative fragmentation of the pentose substrate. Both reactions occur simultaneously and in competition at the same active site. The chain is Ribulose bisphosphate carboxylase large chain from Rhizobium meliloti (strain 1021) (Ensifer meliloti).